We begin with the raw amino-acid sequence, 246 residues long: DNA repair protein RecO (246 aa).

This sequence belongs to the RecO family.

Involved in DNA repair and RecF pathway recombination. The polypeptide is DNA repair protein RecO (Methylorubrum populi (strain ATCC BAA-705 / NCIMB 13946 / BJ001) (Methylobacterium populi)).